The following is a 403-amino-acid chain: Phosphoglycerate kinase (403 aa).

Substrate contacts are provided by residues 22–24, arginine 37, 60–63, arginine 119, and arginine 156; these read DLN and HLGR. ATP is bound by residues lysine 206, glycine 302, glutamate 333, and 359 to 362; that span reads GGDS.

Belongs to the phosphoglycerate kinase family. As to quaternary structure, monomer.

It is found in the cytoplasm. It carries out the reaction (2R)-3-phosphoglycerate + ATP = (2R)-3-phospho-glyceroyl phosphate + ADP. It participates in carbohydrate degradation; glycolysis; pyruvate from D-glyceraldehyde 3-phosphate: step 2/5. The polypeptide is Phosphoglycerate kinase (Streptomyces avermitilis (strain ATCC 31267 / DSM 46492 / JCM 5070 / NBRC 14893 / NCIMB 12804 / NRRL 8165 / MA-4680)).